A 510-amino-acid chain; its full sequence is Olfactomedin-4 (510 aa).

Residues 1–20 form the signal peptide; sequence MRPGLSFLLALLFFLGQAAG. N-linked (GlcNAc...) asparagine glycosylation is found at N72 and N136. The stretch at 155 to 234 forms a coiled coil; it reads DFELIKVEVK…ECEASKDQNT (80 aa). The region spanning 245-507 is the Olfactomedin-like domain; the sequence is SCGHGGVVNI…LLNYDLSVLQ (263 aa). An intrachain disulfide couples C246 to C437. N-linked (GlcNAc...) asparagine glycosylation is present at N253.

Homomultimer; disulfide-linked. Interacts with NDUFA13. Interacts with cell surface lectins (locutions ricinus communis agglutinin I, concanavalin-A and wheat germ agglutinin) and cadherin. Post-translationally, N-glycosylated. As to expression, expressed during myeloid lineage development. Much higher expression in bone marrow neutrophils than in peripheral blood neutrophils (at protein level). Strongly expressed in the prostate, small intestine and colon and moderately expressed in the bone marrow and stomach. Overexpressed in some pancreatic cancer tissues.

It localises to the secreted. The protein localises to the extracellular space. It is found in the mitochondrion. In terms of biological role, may promote proliferation of pancreatic cancer cells by favoring the transition from the S to G2/M phase. In myeloid leukemic cell lines, inhibits cell growth and induces cell differentiation and apoptosis. May play a role in the inhibition of EIF4EBP1 phosphorylation/deactivation. Facilitates cell adhesion, most probably through interaction with cell surface lectins and cadherin. The sequence is that of Olfactomedin-4 (OLFM4) from Homo sapiens (Human).